The primary structure comprises 152 residues: Large ribosomal subunit protein bL9 (152 aa).

It belongs to the bacterial ribosomal protein bL9 family.

Its function is as follows. Binds to the 23S rRNA. The protein is Large ribosomal subunit protein bL9 of Crocosphaera subtropica (strain ATCC 51142 / BH68) (Cyanothece sp. (strain ATCC 51142)).